An 871-amino-acid polypeptide reads, in one-letter code: Ubiquitin carboxyl-terminal hydrolase 8 (871 aa).

The DUSP domain maps to 4–99 (TSPDESPDST…GETGEASVSG (96 aa)). The 591-residue stretch at 279-869 (TGLQNLGNTC…AAYVLFYKRL (591 aa)) folds into the USP domain. Cys-288 (nucleophile) is an active-site residue. Residues 615 to 650 (ENLENPTEEEATDKTDTDGTTSVEDTNSTDVKETTE) are disordered. The Proton acceptor role is filled by His-828.

The protein belongs to the peptidase C19 family.

It carries out the reaction Thiol-dependent hydrolysis of ester, thioester, amide, peptide and isopeptide bonds formed by the C-terminal Gly of ubiquitin (a 76-residue protein attached to proteins as an intracellular targeting signal).. Its function is as follows. Recognizes and hydrolyzes the peptide bond at the C-terminal Gly of ubiquitin. Involved in the processing of poly-ubiquitin precursors as well as that of ubiquitinated proteins. This Arabidopsis thaliana (Mouse-ear cress) protein is Ubiquitin carboxyl-terminal hydrolase 8 (UBP8).